The sequence spans 510 residues: MAFQVNTNINAMNAHVQSALTQNALKTSLERLSSGLRINKAADDASGMTVADSLRSQASSLGQAIANTNDGMGIIQVADKAMDEQLKILDTVKVKATQAAQDGQTTESRKAIQSDIVRLIQGLDNIGNTTTYNGQALLSGQFTNKEFQVGAYSNQSIKASIGSTTSDKIGQVRIATGALITASGDISLTFKQVDGVNDVTLESVKVSSSAGTGIGVLAEVINKNSNRTGVKAYASVITTSDVAVQSGSLSNLTLNGIHLGNIADIKKNDSDGRLVAAINAVTSETGVEAYTDQKGRLNLRSIDGRGIEIKTDSVSNGPSALTMVNGGQDLTKGSTNYGRLSLTRLDAKSINVVSASDSQHLGFTAIGFGESQVAETTVNLRDVTGNFNANVKSASGANYNAVIASGNQSLGSGVTTLRGAMVVIDIAESAMKMLDKVRSDLGSVQNQMISTVNNISITQVNVKAAESQIRDVDFAEESANFNKNNILAQSGSYAMSQANTVQQNILRLLT.

Belongs to the bacterial flagellin family. Heteromer of FlaA and FlaB. FlaB is located proximal to the hook while the remainder of the filament is composed of the predominant FlaA.

The protein localises to the secreted. The protein resides in the bacterial flagellum. Its function is as follows. Flagellin is the subunit protein which polymerizes to form the filaments of bacterial flagella. Important for motility and virulence. The chain is Flagellin A (flaA) from Helicobacter pylori (strain ATCC 700392 / 26695) (Campylobacter pylori).